The sequence spans 352 residues: C-C chemokine receptor type 5 (352 aa).

Over 1–30 (MDYQVSSPTYDIDYYTSEPCQKIKVKQIAA) the chain is Extracellular. A Sulfotyrosine modification is found at Y3. 2 O-linked (GalNAc...) serine glycosylation sites follow: S6 and S7. Sulfotyrosine occurs at positions 10, 14, and 15. Intrachain disulfides connect C20–C269 and C101–C178. A helical membrane pass occupies residues 31–58 (RLLPPLYSLVFIFGFVGNILVVLILINC). The Cytoplasmic segment spans residues 59–68 (KRLKSMTDIY). A helical membrane pass occupies residues 69–89 (LLNLAISDLLFLLTVPFWAHY). Topologically, residues 90–102 (AAAQWDFGNTMCQ) are extracellular. A helical transmembrane segment spans residues 103 to 124 (LLTGLYFIGFFSGIFFIILLTI). Topologically, residues 125–141 (DRYLAIVHAVFALKART) are cytoplasmic. A helical membrane pass occupies residues 142–166 (VTFGVVTSVITWVVAVFASLPRIIF). The Extracellular portion of the chain corresponds to 167–198 (TRSQREGLHYTCSSHFPYSQYQFWKNFQTLKI). A helical transmembrane segment spans residues 199-218 (VILGLVLPLLVMVICYSGIL). At 219-235 (KTLLRCRNDKKRHRAVR) the chain is on the cytoplasmic side. The chain crosses the membrane as a helical span at residues 236-260 (LIFTIMIVYFLFWAPYNIVLLLNTF). Topologically, residues 261 to 277 (QEFFGLNNCSSSNRLDQ) are extracellular. The chain crosses the membrane as a helical span at residues 278 to 301 (AMQVTETLGMTHCCINPIIYAFVG). Topologically, residues 302-352 (EKFRNYLLVFFQKHIAKRFCKCCSIFQQDAPERASSVYTRSTGEQETSVGL) are cytoplasmic. Residues C321, C323, and C324 are each lipidated (S-palmitoyl cysteine). A phosphoserine; by BARK1 mark is found at S336, S337, S342, and S349.

Belongs to the G-protein coupled receptor 1 family. In terms of assembly, interacts with PRAF2. Efficient ligand binding to CCL3/MIP-1alpha and CCL4/MIP-1beta requires sulfation, O-glycosylation and sialic acid modifications. Glycosylation on Ser-6 is required for efficient binding of CCL4. Interacts with GRK2. Interacts with ARRB1 and ARRB2. Interacts with CNIH4. Interacts with S100A4; this interaction stimulates T-lymphocyte chemotaxis. In terms of processing, sulfated on at least 2 of the N-terminal tyrosines. Sulfation is required for efficient binding of the chemokines, CCL3 and CCL4. Post-translationally, palmitoylation in the C-terminal is important for cell surface expression. Phosphorylation on serine residues in the C-terminal is stimulated by binding CC chemokines especially by APO-RANTES. In terms of processing, O-glycosylated, but not N-glycosylated. Ser-6 appears to be the major site even if Ser-7 may be also O-glycosylated. Also sialylated glycans present which contribute to chemokine binding. Thr-16 and Ser-17 may also be glycosylated and, if so, with small moieties such as a T-antigen.

The protein localises to the cell membrane. In terms of biological role, receptor for a number of inflammatory CC-chemokines including CCL3/MIP-1-alpha, CCL4/MIP-1-beta and RANTES and subsequently transduces a signal by increasing the intracellular calcium ion level. May play a role in the control of granulocytic lineage proliferation or differentiation. Participates in T-lymphocyte migration to the infection site by acting as a chemotactic receptor. This is C-C chemokine receptor type 5 (CCR5) from Chlorocebus sabaeus (Green monkey).